The primary structure comprises 238 residues: Phosphoribosylaminoimidazole-succinocarboxamide synthase (238 aa).

This sequence belongs to the SAICAR synthetase family.

It catalyses the reaction 5-amino-1-(5-phospho-D-ribosyl)imidazole-4-carboxylate + L-aspartate + ATP = (2S)-2-[5-amino-1-(5-phospho-beta-D-ribosyl)imidazole-4-carboxamido]succinate + ADP + phosphate + 2 H(+). It functions in the pathway purine metabolism; IMP biosynthesis via de novo pathway; 5-amino-1-(5-phospho-D-ribosyl)imidazole-4-carboxamide from 5-amino-1-(5-phospho-D-ribosyl)imidazole-4-carboxylate: step 1/2. The protein is Phosphoribosylaminoimidazole-succinocarboxamide synthase (purC) of Pyrococcus horikoshii (strain ATCC 700860 / DSM 12428 / JCM 9974 / NBRC 100139 / OT-3).